The sequence spans 143 residues: ATP synthase subunit b', chloroplastic (143 aa).

A helical transmembrane segment spans residues 12-31; sequence LPVMGLQVVLLSWLLEQILY.

The protein belongs to the ATPase B chain family. As to quaternary structure, F-type ATPases have 2 components, F(1) - the catalytic core - and F(0) - the membrane proton channel. F(1) has five subunits: alpha(3), beta(3), gamma(1), delta(1), epsilon(1). F(0) has four main subunits: a(1), b(1), b'(1) and c(10-14). The alpha and beta chains form an alternating ring which encloses part of the gamma chain. F(1) is attached to F(0) by a central stalk formed by the gamma and epsilon chains, while a peripheral stalk is formed by the delta, b and b' chains.

Its subcellular location is the plastid. It is found in the chloroplast thylakoid membrane. Its function is as follows. F(1)F(0) ATP synthase produces ATP from ADP in the presence of a proton or sodium gradient. F-type ATPases consist of two structural domains, F(1) containing the extramembraneous catalytic core and F(0) containing the membrane proton channel, linked together by a central stalk and a peripheral stalk. During catalysis, ATP synthesis in the catalytic domain of F(1) is coupled via a rotary mechanism of the central stalk subunits to proton translocation. Functionally, component of the F(0) channel, it forms part of the peripheral stalk, linking F(1) to F(0). The b'-subunit is a diverged and duplicated form of b found in plants and photosynthetic bacteria. In Cyanidioschyzon merolae (strain NIES-3377 / 10D) (Unicellular red alga), this protein is ATP synthase subunit b', chloroplastic.